A 457-amino-acid polypeptide reads, in one-letter code: Multidrug resistance protein MdtK (457 aa).

12 consecutive transmembrane segments (helical) span residues 11–31 (LLALAIPVILAQIAQTAMGFV), 53–73 (IWLPAILFGHGLLLALTPVIA), 93–113 (WLAGFVSVLIMLVLWNAGYII), 127–147 (AVGYLRALLWGAPGYLFFQVA), 160–180 (GMVMGFIGLLVNIPVNYIFIY), 189–209 (GGVGCGVATAAVYWVMFLAMV), 243–263 (LPIALALFFEVTLFAVVALLV), 276–296 (IALNFSSLMFVLPMSLAAAVT), 314–334 (AARTGLMVGVCMATLTAIFTV), 350–370 (VVTLAAHLMLLAAVYQISDSI), 387–407 (IFYITFTAYWVLGLPSGYILA), and 418–438 (PAGFWIGFIIGLTSAAIMMML).

Belongs to the multi antimicrobial extrusion (MATE) (TC 2.A.66.1) family. MdtK subfamily.

It is found in the cell inner membrane. Multidrug efflux pump that functions probably as a Na(+)/drug antiporter. This chain is Multidrug resistance protein MdtK, found in Escherichia coli (strain SE11).